The sequence spans 248 residues: Cutinase cut1 (248 aa).

The signal sequence occupies residues 1–17; it reads MRSLSLFTALLAGQAFA. The cysteines at positions 79 and 153 are disulfide-linked. Residue serine 164 is the Nucleophile of the active site. The cysteines at positions 212 and 219 are disulfide-linked. Residue aspartate 216 is part of the active site. The Proton donor/acceptor role is filled by histidine 229.

The protein belongs to the cutinase family. In terms of processing, the 2 disulfide bonds play a critical role in holding the catalytic residues in juxta-position; reduction of the disulfide bridges results in the complete inactivation of the enzyme.

The protein resides in the secreted. It catalyses the reaction cutin + H2O = cutin monomers.. In terms of biological role, catalyzes the hydrolysis of complex carboxylic polyesters found in the cell wall of plants. May degrade cutin, a macromolecule that forms the structure of the plant cuticle. May also degrade suberin, a specialized macromolecule found in the cell wall of various plant tissues. The polypeptide is Cutinase cut1 (Trichoderma harzianum (Hypocrea lixii)).